Consider the following 216-residue polypeptide: Redox-sensing transcriptional repressor Rex (216 aa).

A DNA-binding region (H-T-H motif) is located at residues 16–55 (VYYRYLNVLLNANKHRVSSTELSEAVQVDSATIRRDFSYF). 90 to 95 (GVGSLG) is a binding site for NAD(+).

It belongs to the transcriptional regulatory Rex family. In terms of assembly, homodimer.

It localises to the cytoplasm. In terms of biological role, modulates transcription in response to changes in cellular NADH/NAD(+) redox state. In Limosilactobacillus fermentum (strain NBRC 3956 / LMG 18251) (Lactobacillus fermentum), this protein is Redox-sensing transcriptional repressor Rex.